The primary structure comprises 59 residues: Early protein GP1A (59 aa).

This chain is Early protein GP1A (1A), found in Bacillus phage PZA (Bacteriophage PZA).